The primary structure comprises 60 residues: Large ribosomal subunit protein bL32 (60 aa).

Belongs to the bacterial ribosomal protein bL32 family.

The polypeptide is Large ribosomal subunit protein bL32 (Thermosipho africanus (strain TCF52B)).